The sequence spans 387 residues: 1-hydroxy-2-naphthoate 1,2-dioxygenasee (387 aa).

2 consecutive Cupin type-2 domains span residues 103–171 (FQLV…VWLD) and 271–337 (VQRL…VLLF).

Homohexamer. Fe(2+) is required as a cofactor.

The enzyme catalyses 1-hydroxy-2-naphthoate + O2 = (3Z)-4-(2-carboxyphenyl)-2-oxobut-3-enoate + H(+). Its function is as follows. Dioxygenase involved in phenanthrene catabolism by mediating cleavage of 1-hydroxy-2-naphthoate. The chain is 1-hydroxy-2-naphthoate 1,2-dioxygenasee (phdI) from Nocardioides sp. (strain KP7).